The following is a 271-amino-acid chain: Thiazole synthase (271 aa).

Lys-104 functions as the Schiff-base intermediate with DXP in the catalytic mechanism. 1-deoxy-D-xylulose 5-phosphate is bound by residues Gly-165, 192–193 (AG), and 214–215 (NT).

Belongs to the ThiG family. In terms of assembly, homotetramer. Forms heterodimers with either ThiH or ThiS.

The protein resides in the cytoplasm. It carries out the reaction [ThiS sulfur-carrier protein]-C-terminal-Gly-aminoethanethioate + 2-iminoacetate + 1-deoxy-D-xylulose 5-phosphate = [ThiS sulfur-carrier protein]-C-terminal Gly-Gly + 2-[(2R,5Z)-2-carboxy-4-methylthiazol-5(2H)-ylidene]ethyl phosphate + 2 H2O + H(+). Its pathway is cofactor biosynthesis; thiamine diphosphate biosynthesis. Catalyzes the rearrangement of 1-deoxy-D-xylulose 5-phosphate (DXP) to produce the thiazole phosphate moiety of thiamine. Sulfur is provided by the thiocarboxylate moiety of the carrier protein ThiS. In vitro, sulfur can be provided by H(2)S. This Burkholderia lata (strain ATCC 17760 / DSM 23089 / LMG 22485 / NCIMB 9086 / R18194 / 383) protein is Thiazole synthase.